A 300-amino-acid chain; its full sequence is Probable alpha-L-glutamate ligase (300 aa).

Residues 104–287 (LQLLARQGID…IAGKMISWIE (184 aa)) enclose the ATP-grasp domain. ATP contacts are provided by residues Lys-141, 178–179 (EY), Asp-187, and 211–213 (RSN). 3 residues coordinate Mg(2+): Asp-248, Glu-260, and Asn-262. The Mn(2+) site is built by Asp-248, Glu-260, and Asn-262.

Belongs to the RimK family. It depends on Mg(2+) as a cofactor. The cofactor is Mn(2+).

The chain is Probable alpha-L-glutamate ligase from Enterobacter sp. (strain 638).